We begin with the raw amino-acid sequence, 1742 residues long: Complement C4 (1742 aa).

Positions 1 to 19 (MRLLWGLLWAFGLFASSLQ) are cleaved as a signal peptide. An N-linked (GlcNAc...) asparagine glycan is attached at N60. Residues C68 and C97 are joined by a disulfide bond. Residue N226 is glycosylated (N-linked (GlcNAc...) asparagine). C634 and C668 are joined by a disulfide. Residues 675–678 (RKKR) constitute a propeptide that is removed on maturation. Disulfide bonds link C701–C727, C702–C734, and C715–C735. Positions 701 to 735 (CCQDGLTRLPMVRSCEQRAARVLQPACREPFLSCC) constitute an Anaphylatoxin-like domain. N861 carries N-linked (GlcNAc...) asparagine glycosylation. Positions 1007-1010 (CGEQ) form a cross-link, isoglutamyl cysteine thioester (Cys-Gln). N-linked (GlcNAc...) asparagine glycans are attached at residues N1325 and N1388. Y1414, Y1418, and Y1420 each carry sulfotyrosine. Positions 1445 to 1451 (RRNRRRR) are excised as a propeptide. 5 disulfide bridges follow: C1469–C1533, C1581–C1586, C1593–C1671, C1616–C1740, and C1716–C1725. The 148-residue stretch at 1593-1740 (CPRQRRALER…FIQEYSTLGC (148 aa)) folds into the NTR domain.

In absence of complement activation, circulates in blood as a disulfide-linked trimer of an alpha, beta and gamma chain. As to quaternary structure, complement C4b is composed of complement C4b-A, complement C4 beta and complement C4 gamma chains that are associated via disulfide bonds. Non-enzymatic component of the C3 convertase, also named C4bC2b, composed of the serine protease complement C2b (C2), as well as complement C4b. Non-enzymatic component of the C5 convertase, also named C4bC2bC3b, composed of the serine protease complement C2b (C2), complement C3b, as well as complement C4b. Prior to secretion, the single-chain precursor is enzymatically cleaved by plasminogen (PLG) to yield non-identical chains alpha, beta and gamma. During activation of the complement systems, the alpha chain is cleaved into C4a and C4b by different proteases depending on the complement pathway: C4b stays linked to the beta and gamma chains, while C4a is released in the plasma. The alpha chain is cleaved by C1S to generate C4a and C4b following activation by the classical complement system. The alpha chain is cleaved to generate C4a and C4b by MASP2 following activation by the lectin complement system. The alpha chain is cleaved by GZMK to generate C4a and C4b following activation by the GZMK complement system. Further degradation of C4b by C1 into the inactive fragments C4c and C4d blocks the generation of C3 convertase. The proteolytic cleavages often are incomplete so that many structural forms can be found in plasma. Post-translationally, upon activation, the internal thioester bond reacts with carbohydrate antigens on the target surface to form amide or ester bonds, leading to covalent association with the surface of pathogens. In terms of processing, complement C4b interacts with complement C3b via a thioester linkage. N- and O-glycosylated. O-glycosylated with a core 1 or possibly core 8 glycan.

It localises to the secreted. Its subcellular location is the cell surface. Precursor of non-enzymatic components of the classical, lectin and GZMK complement pathways, which consist in a cascade of proteins that leads to phagocytosis and breakdown of pathogens and signaling that strengthens the adaptive immune system. Functionally, non-enzymatic component of C3 and C5 convertases. Generated following cleavage by complement proteases (C1S, MASP2 or GZMK, depending on the complement pathway), it covalently attaches to the surface of pathogens, where it acts as an opsonin that marks the surface of antigens for removal. It then recruits the serine protease complement C2b to form the C3 and C5 convertases, which cleave and activate C3 and C5, respectively, the next components of the complement pathways. Complement C4b-A isotype is responsible for effective binding to form amide bonds with immune aggregates or protein antigens, while complement C4b-B isotype catalyzes the transacylation of the thioester carbonyl group to form ester bonds with carbohydrate antigens. In terms of biological role, putative humoral mediator released following cleavage by complement proteases (C1S, MASP2 or GZMK, depending on the complement pathway). While it is strongly similar to anaphylatoxins, its role is unclear. Was reported to act as a mediator of local inflammatory process; however these effects were probably due to contamination with C3a and/C5a anaphylatoxins in biological assays. This is Complement C4 from Cavia porcellus (Guinea pig).